The following is a 1662-amino-acid chain: ABC transporter A family member 5 (1662 aa).

Transmembrane regions (helical) follow at residues 30-50 (IVFP…VQLF), 242-262 (SVFV…ELVV), 284-304 (ISWI…IIVI), 317-337 (IIVI…AFIF), 346-366 (FAGL…IFIG), 377-397 (LLLC…IMSI), and 417-437 (QIIG…WYLD). Residues 505–739 (ISIRNLRKEF…YGVGYLLTCS (235 aa)) enclose the ABC transporter 1 domain. Position 541-548 (541-548 (GPNGSGKS)) interacts with ATP. The next 7 membrane-spanning stretches (helical) occupy residues 872 to 892 (FKAF…SIIV), 1052 to 1072 (IVYF…SFAG), 1102 to 1122 (LWDY…LAIV), 1130 to 1150 (FGLF…LSYL), 1163 to 1183 (GAIT…MIIL), 1201 to 1221 (IIDI…VIFI), and 1246 to 1266 (STPI…ILLI). Residues 1322–1557 (LQYKGLHKLF…FGAGYSVEVK (236 aa)) enclose the ABC transporter 2 domain. 1360-1367 (GLNGAGKT) lines the ATP pocket.

The protein belongs to the ABC transporter superfamily. ABCA family.

The protein resides in the membrane. The sequence is that of ABC transporter A family member 5 (abcA5) from Dictyostelium discoideum (Social amoeba).